The chain runs to 327 residues: Aldo/keto reductase slr0942 (327 aa).

Position 18 to 27 (18 to 27 (GEQIPALGLG)) interacts with NADP(+). Y57 (proton donor) is an active-site residue. A substrate-binding site is contributed by H119. An NADP(+)-binding site is contributed by 216–280 (SPLGSGDRPA…SVNPERLEQN (65 aa)).

It belongs to the aldo/keto reductase family. In terms of assembly, monomer.

It catalyses the reaction a secondary alcohol + NADP(+) = a ketone + NADPH + H(+). Its activity is regulated as follows. Curcumin non-competitively inhibits the enzyme with respect to furfural. To a lesser extent, enzyme activity is also inhibited by indomethacin, coumarate, coumarin, and alrestatin. Aldo/keto reductase with broad substrate spectrum. Catalyzes the NADPH-dependent reduction of aldehyde- and ketone-groups of different classes of carbonyl compounds to the corresponding alcohols. Highest enzymatic efficiency is observed with 4-oxonon-2-enal (4-ONE) and 4-hydroxynon-2-enal (4-HNE), that are lipid peroxidation products, and 9,10-phenanthrenequinone (9,10-PQ), a photoproduct of phenanthrene that is one of the most prevalent polycyclic aromatic hydrocarbons in the environment. Is also active on sugar-derived reactive carbonyls such as methylglyoxal (MG), glyoxal and 3-deoxyglucosone (3-DG), and on other lipid-derived carbonyls such as acrolein. May be involved in the detoxification of the toxic lipid peroxidation products 4-ONE and 4-HNE besides many other exo- and endogenic reactive carbonyl compounds (RCs) that may lead to photoinhibition or other cell damages. This is Aldo/keto reductase slr0942 from Synechocystis sp. (strain ATCC 27184 / PCC 6803 / Kazusa).